The following is a 204-amino-acid chain: N-(5'-phosphoribosyl)anthranilate isomerase (204 aa).

The protein belongs to the TrpF family.

It catalyses the reaction N-(5-phospho-beta-D-ribosyl)anthranilate = 1-(2-carboxyphenylamino)-1-deoxy-D-ribulose 5-phosphate. It participates in amino-acid biosynthesis; L-tryptophan biosynthesis; L-tryptophan from chorismate: step 3/5. The protein is N-(5'-phosphoribosyl)anthranilate isomerase of Bacillus cereus (strain Q1).